Consider the following 420-residue polypeptide: L-rhamnose isomerase (420 aa).

Mn(2+) is bound by residues H264, D296, and D298.

It belongs to the rhamnose isomerase family. It depends on Mn(2+) as a cofactor.

The protein resides in the cytoplasm. It catalyses the reaction L-rhamnopyranose = L-rhamnulose. Its pathway is carbohydrate degradation; L-rhamnose degradation; glycerone phosphate from L-rhamnose: step 1/3. In terms of biological role, catalyzes the interconversion of L-rhamnose and L-rhamnulose. The chain is L-rhamnose isomerase from Listeria monocytogenes serotype 4b (strain CLIP80459).